Consider the following 289-residue polypeptide: tRNA(Ile)-lysidine synthase (289 aa).

Residue 11–16 (SGGPDS) coordinates ATP.

The protein belongs to the tRNA(Ile)-lysidine synthase family.

The protein localises to the cytoplasm. It carries out the reaction cytidine(34) in tRNA(Ile2) + L-lysine + ATP = lysidine(34) in tRNA(Ile2) + AMP + diphosphate + H(+). Functionally, ligates lysine onto the cytidine present at position 34 of the AUA codon-specific tRNA(Ile) that contains the anticodon CAU, in an ATP-dependent manner. Cytidine is converted to lysidine, thus changing the amino acid specificity of the tRNA from methionine to isoleucine. This is tRNA(Ile)-lysidine synthase from Mycoplasma pneumoniae (strain ATCC 29342 / M129 / Subtype 1) (Mycoplasmoides pneumoniae).